The primary structure comprises 387 residues: Queuine tRNA-ribosyltransferase (387 aa).

The active-site Proton acceptor is aspartate 102. Residues 102–106 (DSGGF), aspartate 156, glutamine 205, and glycine 232 contribute to the substrate site. The segment at 263–269 (GVGTPED) is RNA binding. Aspartate 282 (nucleophile) is an active-site residue. The segment at 287-291 (TRNAR) is RNA binding; important for wobble base 34 recognition. Residues cysteine 320, cysteine 322, cysteine 325, and histidine 351 each contribute to the Zn(2+) site.

The protein belongs to the queuine tRNA-ribosyltransferase family. Homodimer. Within each dimer, one monomer is responsible for RNA recognition and catalysis, while the other monomer binds to the replacement base PreQ1. Zn(2+) is required as a cofactor.

The enzyme catalyses 7-aminomethyl-7-carbaguanine + guanosine(34) in tRNA = 7-aminomethyl-7-carbaguanosine(34) in tRNA + guanine. It functions in the pathway tRNA modification; tRNA-queuosine biosynthesis. Its function is as follows. Catalyzes the base-exchange of a guanine (G) residue with the queuine precursor 7-aminomethyl-7-deazaguanine (PreQ1) at position 34 (anticodon wobble position) in tRNAs with GU(N) anticodons (tRNA-Asp, -Asn, -His and -Tyr). Catalysis occurs through a double-displacement mechanism. The nucleophile active site attacks the C1' of nucleotide 34 to detach the guanine base from the RNA, forming a covalent enzyme-RNA intermediate. The proton acceptor active site deprotonates the incoming PreQ1, allowing a nucleophilic attack on the C1' of the ribose to form the product. After dissociation, two additional enzymatic reactions on the tRNA convert PreQ1 to queuine (Q), resulting in the hypermodified nucleoside queuosine (7-(((4,5-cis-dihydroxy-2-cyclopenten-1-yl)amino)methyl)-7-deazaguanosine). In Polaromonas naphthalenivorans (strain CJ2), this protein is Queuine tRNA-ribosyltransferase.